The chain runs to 386 residues: 2,3-diketo-5-methylthiopentyl-1-phosphate enolase (386 aa).

The active-site Proton acceptor is Lys-85. Substrate is bound by residues Lys-131, 157 to 160 (KDDE), His-248, Gly-316, and 338 to 339 (GT). Mg(2+) contacts are provided by Lys-157, Asp-159, and Glu-160. Lys-157 is modified (N6-carboxylysine).

Belongs to the RuBisCO large chain family. Type IV subfamily. As to quaternary structure, homodimer. Requires Mg(2+) as cofactor.

It carries out the reaction 5-methylsulfanyl-2,3-dioxopentyl phosphate = 2-hydroxy-5-methylsulfanyl-3-oxopent-1-enyl phosphate. The protein operates within amino-acid biosynthesis; L-methionine biosynthesis via salvage pathway; L-methionine from S-methyl-5-thio-alpha-D-ribose 1-phosphate: step 3/6. Its function is as follows. Catalyzes the enolization of 2,3-diketo-5-methylthiopentyl-1-phosphate (DK-MTP-1-P) into 2-hydroxy-3-keto-5-methylthiopentenyl-1-phosphate (HK-MTPenyl-1-P). This chain is 2,3-diketo-5-methylthiopentyl-1-phosphate enolase (mtnW), found in Microcystis aeruginosa.